A 518-amino-acid polypeptide reads, in one-letter code: DNA-binding protein Ikaros (518 aa).

Residues 1–51 (METDEAQDMSQVSGKESPPISDVPDDADEPMPVPEDLSTTTGGQQSVKNER) form a disordered region. A compositionally biased stretch (polar residues) spans 37–47 (LSTTTGGQQSV). 4 C2H2-type zinc fingers span residues 117 to 139 (LKCD…NRSH), 145 to 167 (FQCN…IKLH), 173 to 195 (FKCH…LRTH), and 201 to 224 (HKCG…ERCH). The interval 381 to 405 (SVSSERDASPSNSCQDSTDTESNNE) is disordered. 2 C2H2-type zinc fingers span residues 461–483 (YKCE…MGCH) and 489–513 (FECN…RGEH).

It belongs to the Ikaros C2H2-type zinc-finger protein family. In terms of tissue distribution, expressed in embryonic hematopoietic organs such as the bursa of Fabricius, thymus and spleen. In the adult, expressed in spleen, thymus, bursa and peripheral blood leukocytes.

The protein localises to the nucleus. Binds and activates the enhancer (delta-A element) of the CD3-delta gene. Functions in the specification and the maturation of the T-lymphocyte. Also interacts with a critical control element in the TDT (terminal deoxynucleotidyltransferase) promoter as well as with the promoters for other genes expressed during early stages of B- and T-cell development. Function is isoform-specific and is modulated by dominant-negative inactive isoforms. This is DNA-binding protein Ikaros (IKZF1) from Gallus gallus (Chicken).